We begin with the raw amino-acid sequence, 720 residues long: MFTKHSVEIDWGGRPLKLETGKIARQADGAVVATYGETVVLATVVAAKSPREGVDFLPLTVDYQEKAYAAGRIPGGYFKREGRPTEKETLVSRLIDRPIRPLFVDAWRNETQVIVTTLSHDMENDPDILAMVAASAALTLSGVPFKGPIGAARVGFANDEYILNPTLDEMTDTQLDLVVAGTSDAVLMVESEAKELNEDIMLGAVMFGHRHFQPVINAIIELAEKAAKEPRDVAIIDNSAIEKEMLGIAEQDLRKAYAIPVKQERYAAVAAVKEKVMAYFFPEGQEPKYEKLRVADVFKELEAKIVRWNILDTGRRIDGRDVKTVRNIVCEVGVLPRAHGSALFTRGETQALVVTTLGTGEDEQYIDALSGTYKETFLLHYNFPPYSVGETGRLGGTKRREIGHGKLAWRAIHPVLPPHHEFPYTTRVVSEVTESNGSSSMATVCGSSLALMDAGVPLKRPTAGIAMGLILEGSRYAVLSDILGDEDHLGDMDFKVAGTESGITSLQMDIKIEGITEEIMRVALGQAREGRIHILGEMSKALTAARAELGEYAPRIETFKIPTDKIREVIGTGGKVIREIVEKTGAKVNIEDDGTVKVASSDGEAMKAAIKWIKSIASDPEIGQIYDGTVVKVMEFGAFVNFFGTRDGLVHISQLADKRVQKTTDVVKEGDKVKVKLLGFDDRGKTRLSMKAVDQTTGEDLEAKQKAEGGAEAPREAAGE.

Mg(2+)-binding residues include Asp487 and Asp493. The region spanning 554–613 (PRIETFKIPTDKIREVIGTGGKVIREIVEKTGAKVNIEDDGTVKVASSDGEAMKAAIKWI) is the KH domain. The region spanning 623 to 691 (GQIYDGTVVK…DRGKTRLSMK (69 aa)) is the S1 motif domain. The segment at 692–720 (AVDQTTGEDLEAKQKAEGGAEAPREAAGE) is disordered. A compositionally biased stretch (basic and acidic residues) spans 701–720 (LEAKQKAEGGAEAPREAAGE).

This sequence belongs to the polyribonucleotide nucleotidyltransferase family. The cofactor is Mg(2+).

The protein resides in the cytoplasm. The catalysed reaction is RNA(n+1) + phosphate = RNA(n) + a ribonucleoside 5'-diphosphate. In terms of biological role, involved in mRNA degradation. Catalyzes the phosphorolysis of single-stranded polyribonucleotides processively in the 3'- to 5'-direction. The sequence is that of Polyribonucleotide nucleotidyltransferase from Bradyrhizobium sp. (strain BTAi1 / ATCC BAA-1182).